A 2368-amino-acid chain; its full sequence is Voltage-dependent P/Q-type calcium channel subunit alpha-1A (2368 aa).

Residues M1 to P100 are Cytoplasmic-facing. One copy of the I repeat lies at N65–F365. A helical transmembrane segment spans residues P101–L119. The Extracellular segment spans residues E120 to T138. The chain crosses the membrane as a helical span at residues E139–A156. Residues L157–R168 are Cytoplasmic-facing. A helical transmembrane segment spans residues N169–L184. The Extracellular portion of the chain corresponds to A185 to D192. The chain crosses the membrane as a helical span at residues L193–I211. Over P212–Q230 the chain is Cytoplasmic. Residues I231–Y250 traverse the membrane as a helical segment. Residues M251 to W337 are Extracellular-facing. An N-linked (GlcNAc...) asparagine glycan is attached at N285. Residue E320 participates in Ca(2+) binding. Residues N338–S362 traverse the membrane as a helical segment. Residues G363–Q489 lie on the Cytoplasmic side of the membrane. A binding to the beta subunit region spans residues Q385 to E402. A Phosphothreonine modification is found at T411. A phosphoserine mark is found at S450 and S453. The II repeat unit spans residues E475–L719. The helical transmembrane segment at A490–V509 threads the bilayer. At H510–Y523 the chain is on the extracellular side. A helical transmembrane segment spans residues A524–L543. The Cytoplasmic segment spans residues G544–S551. The helical transmembrane segment at S552–W570 threads the bilayer. Residues A571–G580 are Extracellular-facing. Residues I581–W599 form a helical membrane-spanning segment. The Cytoplasmic segment spans residues A600 to S618. Residues L619–F638 form a helical membrane-spanning segment. At G639–V691 the chain is on the extracellular side. E670 lines the Ca(2+) pocket. Residues F692–V716 form a helical membrane-spanning segment. The Cytoplasmic segment spans residues D717–Y1190. 2 positions are modified to phosphoserine: S752 and S755. Residues A762 to T781 form a disordered region. Residues N769–Q779 show a composition bias toward polar residues. A Phosphoserine modification is found at S792. Disordered stretches follow at residues P823–E1117 and V1137–P1170. Composition is skewed to basic and acidic residues over residues R850–R862, A871–P924, and R932–D958. Residues S1038, S1042, and S1051 each carry the phosphoserine modification. Polar residues predominate over residues G1056–A1073. A compositionally biased stretch (low complexity) spans S1074–N1083. The segment covering E1094–K1111 has biased composition (polar residues). Positions K1153 to E1163 are enriched in acidic residues. The III repeat unit spans residues N1182–F1465. The helical transmembrane segment at I1191–A1214 threads the bilayer. At E1215–F1231 the chain is on the extracellular side. A helical membrane pass occupies residues D1232–G1251. The Cytoplasmic portion of the chain corresponds to L1252–A1258. A helical membrane pass occupies residues Y1259–T1282. Topologically, residues G1283–I1293 are extracellular. A helical transmembrane segment spans residues K1294–L1311. Topologically, residues P1312–N1330 are cytoplasmic. The chain crosses the membrane as a helical span at residues I1331 to F1350. Topologically, residues K1351–E1437 are extracellular. E1411 is a binding site for Ca(2+). A helical transmembrane segment spans residues M1438–I1462. At I1463–P1518 the chain is on the cytoplasmic side. An IV repeat occupies N1502–F1765. Residues F1519–K1537 traverse the membrane as a helical segment. Topologically, residues F1538–V1551 are extracellular. Residues F1552–I1573 form a helical membrane-spanning segment. Residues L1574–A1580 are Cytoplasmic-facing. The helical transmembrane segment at W1581–E1600 threads the bilayer. Residues F1601–N1607 lie on the Extracellular side of the membrane. N-linked (GlcNAc...) asparagine glycosylation occurs at N1607. A helical membrane pass occupies residues L1608–G1626. The Cytoplasmic portion of the chain corresponds to Y1627 to Y1645. Residues V1646–F1665 traverse the membrane as a helical segment. Over G1666–F1737 the chain is Extracellular. Residues A1738–D1763 form a helical membrane-spanning segment. Residues N1764–C2368 lie on the Cytoplasmic side of the membrane. T1935 carries the post-translational modification Phosphothreonine. The tract at residues Q1940–C2368 is disordered. Polar residues-rich tracts occupy residues T1948–L1963 and S1981–W1997. S1998, S2016, S2028, S2030, S2071, and S2091 each carry phosphoserine. The span at P2008 to V2017 shows a compositional bias: polar residues. The span at E2018–L2034 shows a compositional bias: basic and acidic residues. The segment covering D2063–M2073 has biased composition (polar residues). Composition is skewed to basic and acidic residues over residues R2085–R2102 and P2143–R2153. Over residues P2154–P2172 the composition is skewed to basic residues. Positions P2173–T2209 are enriched in basic and acidic residues. Residues G2213 to P2231 are compositionally biased toward low complexity. Basic and acidic residues predominate over residues E2289–R2305.

This sequence belongs to the calcium channel alpha-1 subunit (TC 1.A.1.11) family. CACNA1A subfamily. As to quaternary structure, voltage-dependent calcium channels are multisubunit complexes, consisting of alpha-1, alpha-2, beta and delta subunits in a 1:1:1:1 ratio. The channel activity is directed by the pore-forming and voltage-sensitive alpha-1 subunit. In many cases, this subunit is sufficient to generate voltage-sensitive calcium channel activity. The auxiliary subunits beta and alpha-2/delta linked by a disulfide bridge regulate the channel activity. Interacts with CABP1. Interacts with the spider omega-agatoxin-IVA (AC P30288). Interacts with TSPOAP1. In terms of tissue distribution, brain specific; mainly found in the cerebellum, olfactory bulb, cerebral cortex, hippocampus, and inferior colliculus. In the hippocampus, expression occurs in pyramidal and granule neurons, as well as in interneurons. Purkinje cells contain predominantly P-type VSCC, the Q-type being a prominent calcium current in cerebellar granule cells.

Its subcellular location is the cell membrane. The catalysed reaction is Ca(2+)(in) = Ca(2+)(out). In terms of biological role, voltage-sensitive calcium channels (VSCC) mediate the entry of calcium ions into excitable cells and are also involved in a variety of calcium-dependent processes, including muscle contraction, hormone or neurotransmitter release, gene expression, cell motility, cell division and cell death. The isoform alpha-1A gives rise to P and/or Q-type calcium currents. P/Q-type calcium channels belong to the 'high-voltage activated' (HVA) group and are specifically blocked by the spider omega-agatoxin-IVA (AC P54282). They are however insensitive to dihydropyridines (DHP). This chain is Voltage-dependent P/Q-type calcium channel subunit alpha-1A, found in Mus musculus (Mouse).